The primary structure comprises 574 residues: Mitochondrial distribution and morphology protein 34 (574 aa).

Positions 1-195 constitute an SMP-LTD domain; the sequence is MAFNFNWSPL…LPAIIHRLSL (195 aa). Disordered regions lie at residues 210-233, 301-403, and 479-515; these read RESPAASASGPGEDPLLSPPKDPV, EGAA…TPPT, and SADGAKTSSQQQPISHGSYLAPREKSHEASSAYESNA. 3 stretches are compositionally biased toward low complexity: residues 212–224, 302–314, and 323–334; these read SPAASASGPGEDP, GAASGVVSPGSPV, and SSPLSSLQDASS. Over residues 335–345 the composition is skewed to polar residues; it reads VLSLQNRSTTP. The span at 346–359 shows a compositional bias: low complexity; that stretch reads GSSFSGYGLSLGAG. The span at 360–373 shows a compositional bias: basic residues; sequence RHSKTRPTRKRKKR. Residues 374–385 show a composition bias toward basic and acidic residues; the sequence is VVDLRKHNKPAD. Positions 393–403 are enriched in low complexity; the sequence is STFTESTTPPT. The span at 484-493 shows a compositional bias: polar residues; it reads KTSSQQQPIS.

This sequence belongs to the MDM34 family. In terms of assembly, component of the ER-mitochondria encounter structure (ERMES) or MDM complex, composed of MMM1, MDM10, MDM12 and MDM34.

It localises to the mitochondrion outer membrane. Component of the ERMES/MDM complex, which serves as a molecular tether to connect the endoplasmic reticulum (ER) and mitochondria. Components of this complex are involved in the control of mitochondrial shape and protein biogenesis, and function in nonvesicular lipid trafficking between the ER and mitochondria. MDM34 is required for the interaction of the ER-resident membrane protein MMM1 and the outer mitochondrial membrane-resident beta-barrel protein MDM10. The chain is Mitochondrial distribution and morphology protein 34 from Coccidioides immitis (strain RS) (Valley fever fungus).